A 478-amino-acid polypeptide reads, in one-letter code: Transposase for insertion sequence element IS231C (478 aa).

The protein belongs to the transposase 11 family.

Functionally, involved in the transposition of the insertion sequence. The chain is Transposase for insertion sequence element IS231C from Bacillus thuringiensis subsp. berliner.